The primary structure comprises 296 residues: Coiled-coil domain-containing protein 69 (296 aa).

Positions 1-18 (MGCRHSRLSSCKPPKKKR) are enriched in basic residues. The tract at residues 1–41 (MGCRHSRLSSCKPPKKKRQEPEPEQPPRPEPHELGPLNGDT) is disordered. Glycine 2 is lipidated: N-myristoyl glycine. A compositionally biased stretch (basic and acidic residues) spans 19 to 33 (QEPEPEQPPRPEPHE). A coiled-coil region spans residues 48–272 (CASEEAERHQ…QEKEELLYRV (225 aa)). Phosphoserine occurs at positions 154 and 241.

The protein belongs to the CCDC69 family. In terms of tissue distribution, highly expressed in duodenum, esophagus, pancreas, prostate, salivary gland, thymus and urinary bladder.

The protein resides in the cytoplasm. It localises to the cytoskeleton. The protein localises to the spindle. It is found in the midbody. May act as a scaffold to regulate the recruitment and assembly of spindle midzone components. Required for the localization of AURKB and PLK1 to the spindle midzone. The protein is Coiled-coil domain-containing protein 69 of Homo sapiens (Human).